Consider the following 298-residue polypeptide: Tyrosine recombinase XerC (298 aa).

The 87-residue stretch at 2 to 88 (TDLHTDVERY…ALRSFFDWLV (87 aa)) folds into the Core-binding (CB) domain. The Tyr recombinase domain maps to 109–288 (HLPKNIDVDD…DFQHLASVYD (180 aa)). Residues Arg-148, Lys-172, His-240, Arg-243, and His-266 contribute to the active site. Tyr-275 functions as the O-(3'-phospho-DNA)-tyrosine intermediate in the catalytic mechanism.

This sequence belongs to the 'phage' integrase family. XerC subfamily. As to quaternary structure, forms a cyclic heterotetrameric complex composed of two molecules of XerC and two molecules of XerD, in which XerC interacts with XerD via its C-terminal region, XerD interacts with XerC via its C-terminal region and so on.

The protein localises to the cytoplasm. Its activity is regulated as follows. FtsK may regulate the catalytic switch between XerC and XerD in the heterotetrameric complex during the two steps of the recombination process. Its function is as follows. Site-specific tyrosine recombinase, which acts by catalyzing the cutting and rejoining of the recombining DNA molecules. Binds cooperatively to specific DNA consensus sequences that are separated from XerD binding sites by a short central region, forming the heterotetrameric XerC-XerD complex that recombines DNA substrates. The complex is essential to convert dimers of the bacterial chromosome into monomers to permit their segregation at cell division. It also contributes to the segregational stability of plasmids. In the complex XerC specifically exchanges the top DNA strands. This is Tyrosine recombinase XerC from Escherichia coli O139:H28 (strain E24377A / ETEC).